Reading from the N-terminus, the 732-residue chain is Probable ATP-dependent RNA helicase DHX35 homolog (732 aa).

The disordered stretch occupies residues 1-50 (MSYHPGHGHRQEPRKGAGARRGFARPDDSADAPRTGPLIFEERSTENAGA). The region spanning 87–251 (LYMCERYRTI…FEMNETGNSD (165 aa)) is the Helicase ATP-binding domain. 100–107 (GETGCGKS) serves as a coordination point for ATP. Residues 198–201 (DEAH) carry the DEAH box motif. Positions 283-457 (AVDTVINIHK…STILQLKALG (175 aa)) constitute a Helicase C-terminal domain.

Belongs to the DEAD box helicase family. DEAH subfamily.

It carries out the reaction ATP + H2O = ADP + phosphate + H(+). The chain is Probable ATP-dependent RNA helicase DHX35 homolog from Caenorhabditis elegans.